The primary structure comprises 436 residues: Testican-3 (436 aa).

The N-terminal stretch at 1–22 is a signal peptide; it reads MLKVSALLCVCAAAWCSQTLAA. 8 disulfide bridges follow: Cys90–Cys101, Cys95–Cys111, Cys139–Cys169, Cys142–Cys162, Cys151–Cys183, Cys317–Cys341, Cys352–Cys359, and Cys361–Cys380. Positions 133 to 185 constitute a Kazal-like domain; sequence GLPSSTCKPCPIAYASPVCGSDGHSYSSQCKLEYQACVLGKQISIKCEGRCPC. The Thyroglobulin type-1 domain occupies 314 to 380; sequence DPPCHTELSN…GSRINGVADC (67 aa). 2 O-linked (Xyl...) (glycosaminoglycan) serine glycosylation sites follow: Ser387 and Ser392. The disordered stretch occupies residues 393–436; sequence GDFREWTDDEGEEDDIMNDKDDIEDDDEDEGDDDDDGDVHDGYI. Acidic residues predominate over residues 399 to 430; it reads TDDEGEEDDIMNDKDDIEDDDEDEGDDDDDGD.

Post-translationally, contains chondroitin sulfate and heparan sulfate O-linked oligosaccharides. Expressed in brain.

Its subcellular location is the secreted. It localises to the extracellular space. The protein resides in the extracellular matrix. In terms of biological role, may participate in diverse steps of neurogenesis. Inhibits the processing of pro-matrix metalloproteinase 2 (MMP-2) by MT1-MMP and MT3-MMP. May interfere with tumor invasion. This is Testican-3 (Spock3) from Mus musculus (Mouse).